We begin with the raw amino-acid sequence, 490 residues long: Lignostilbene-alpha,beta-dioxygenase isozyme III (490 aa).

The Fe cation site is built by H167, H218, H285, and H477.

Belongs to the carotenoid oxygenase family. Homodimer of two beta subunits. Fe(2+) serves as cofactor.

The catalysed reaction is 1,2-bis(4-hydroxy-3-methoxyphenyl)ethylene + O2 = 2 vanillin. With respect to regulation, activity is high with beta-5 type stilbene and minimal with beta-1 type stilbene. A 4-hydroxyl group and trans-stilbene structure is essential for the binding of substrates to the enzyme. Catalyzes the cleavage of the interphenyl double bond (C alpha-C beta) of lignin-derived polyphenolic diaryl-propane type compounds (Stilbene). The chain is Lignostilbene-alpha,beta-dioxygenase isozyme III from Sphingomonas paucimobilis (Pseudomonas paucimobilis).